Reading from the N-terminus, the 458-residue chain is Phosphoglucosamine mutase (458 aa).

Ser-106 functions as the Phosphoserine intermediate in the catalytic mechanism. Residues Ser-106, Asp-247, Asp-249, and Asp-251 each coordinate Mg(2+). Position 106 is a phosphoserine (Ser-106).

The protein belongs to the phosphohexose mutase family. Mg(2+) is required as a cofactor. Post-translationally, activated by phosphorylation.

It catalyses the reaction alpha-D-glucosamine 1-phosphate = D-glucosamine 6-phosphate. Functionally, catalyzes the conversion of glucosamine-6-phosphate to glucosamine-1-phosphate. In Chlamydia trachomatis serovar D (strain ATCC VR-885 / DSM 19411 / UW-3/Cx), this protein is Phosphoglucosamine mutase.